Here is a 258-residue protein sequence, read N- to C-terminus: Ribosomal RNA large subunit methyltransferase E (258 aa).

Residues Gly58, Trp60, Asp78, Asp96, and Asp120 each coordinate S-adenosyl-L-methionine. Lys160 functions as the Proton acceptor in the catalytic mechanism.

Belongs to the class I-like SAM-binding methyltransferase superfamily. RNA methyltransferase RlmE family.

The protein resides in the cytoplasm. The enzyme catalyses uridine(2552) in 23S rRNA + S-adenosyl-L-methionine = 2'-O-methyluridine(2552) in 23S rRNA + S-adenosyl-L-homocysteine + H(+). Its function is as follows. Specifically methylates the uridine in position 2552 of 23S rRNA at the 2'-O position of the ribose in the fully assembled 50S ribosomal subunit. The polypeptide is Ribosomal RNA large subunit methyltransferase E (Methanococcus maripaludis (strain DSM 14266 / JCM 13030 / NBRC 101832 / S2 / LL)).